A 351-amino-acid polypeptide reads, in one-letter code: Flagellar P-ring protein (351 aa).

An N-terminal signal peptide occupies residues 1–20; it reads MKKILFLFTASLLLHVTLQA.

Belongs to the FlgI family. As to quaternary structure, the basal body constitutes a major portion of the flagellar organelle and consists of four rings (L,P,S, and M) mounted on a central rod.

The protein resides in the periplasm. It localises to the bacterial flagellum basal body. Assembles around the rod to form the L-ring and probably protects the motor/basal body from shearing forces during rotation. The protein is Flagellar P-ring protein of Sulfurimonas denitrificans (strain ATCC 33889 / DSM 1251) (Thiomicrospira denitrificans (strain ATCC 33889 / DSM 1251)).